Here is a 464-residue protein sequence, read N- to C-terminus: Cysteine--tRNA ligase (464 aa).

C29 lines the Zn(2+) pocket. Residues 31–41 (ATVQGVPHIGH) carry the 'HIGH' region motif. Residues 160–180 (RLDEVQQGESTASGKRDPRDF) form a disordered region. Zn(2+) contacts are provided by C208, H233, and E237. The short motif at 264-268 (KMSKS) is the 'KMSKS' region element. An ATP-binding site is contributed by K267.

The protein belongs to the class-I aminoacyl-tRNA synthetase family. Monomer. Requires Zn(2+) as cofactor.

It localises to the cytoplasm. It catalyses the reaction tRNA(Cys) + L-cysteine + ATP = L-cysteinyl-tRNA(Cys) + AMP + diphosphate. The polypeptide is Cysteine--tRNA ligase (Saccharopolyspora erythraea (strain ATCC 11635 / DSM 40517 / JCM 4748 / NBRC 13426 / NCIMB 8594 / NRRL 2338)).